An 806-amino-acid chain; its full sequence is Ribonucleoside-diphosphate reductase large subunit (806 aa).

An ATP-cone domain is found at 1 to 91 (MYVLNRKGEE…TDNLHKNTSD (91 aa)). ATP-binding positions include 5 to 6 (NR), 11 to 17 (EDISFDQ), threonine 52, and aspartate 56. Serine 215 lines the GDP pocket. A disulfide bond links cysteine 216 and cysteine 442. DTTP contacts are provided by residues 224 to 226 (DSI), lysine 241, arginine 254, and 261 to 262 (RG). Residue asparagine 425 participates in GDP binding. Asparagine 425 functions as the Proton acceptor in the catalytic mechanism. Cysteine 427 serves as the catalytic Cysteine radical intermediate. GDP contacts are provided by residues glutamate 429 and 604-607 (TAST). Glutamate 429 acts as the Proton acceptor in catalysis.

It belongs to the ribonucleoside diphosphate reductase large chain family. Heterodimer of a large and a small subunit.

The catalysed reaction is a 2'-deoxyribonucleoside 5'-diphosphate + [thioredoxin]-disulfide + H2O = a ribonucleoside 5'-diphosphate + [thioredoxin]-dithiol. Under complex allosteric control mediated by deoxynucleoside triphosphates and ATP binding to separate specificity and activation sites on the large subunit. The type of nucleotide bound at the specificity site determines substrate preference. It seems probable that ATP makes the enzyme reduce CDP and UDP, dGTP favors ADP reduction and dTTP favors GDP reduction. Stimulated by ATP and inhibited by dATP binding to the activity site. In terms of biological role, provides the precursors necessary for DNA synthesis. Catalyzes the biosynthesis of deoxyribonucleotides from the corresponding ribonucleotides. This is Ribonucleoside-diphosphate reductase large subunit (RNR1) from Plasmodium falciparum (isolate Dd2).